A 306-amino-acid chain; its full sequence is UDP-3-O-acyl-N-acetylglucosamine deacetylase (306 aa).

Residues His79, His238, and Asp242 each coordinate Zn(2+). His265 (proton donor) is an active-site residue.

It belongs to the LpxC family. Requires Zn(2+) as cofactor.

The enzyme catalyses a UDP-3-O-[(3R)-3-hydroxyacyl]-N-acetyl-alpha-D-glucosamine + H2O = a UDP-3-O-[(3R)-3-hydroxyacyl]-alpha-D-glucosamine + acetate. It functions in the pathway glycolipid biosynthesis; lipid IV(A) biosynthesis; lipid IV(A) from (3R)-3-hydroxytetradecanoyl-[acyl-carrier-protein] and UDP-N-acetyl-alpha-D-glucosamine: step 2/6. Its function is as follows. Catalyzes the hydrolysis of UDP-3-O-myristoyl-N-acetylglucosamine to form UDP-3-O-myristoylglucosamine and acetate, the committed step in lipid A biosynthesis. This chain is UDP-3-O-acyl-N-acetylglucosamine deacetylase, found in Shewanella piezotolerans (strain WP3 / JCM 13877).